The sequence spans 397 residues: Ethanolaminephosphotransferase 1 (397 aa).

N-acetylalanine is present on Ala-2. 10 helical membrane passes run 47-69 (WLAPNLITFSGFLLVVFNFLLMA), 84-103 (HVPDWVWIVVGILNFVAYTL), 123-145 (LFDHGLDSWSCVYFVVTVYSIFG), 150-172 (GVSVFVLYLLLWVVLFSFILSHW), 179-201 (ILFLPWGYDISQVTISFVYIVTA), 221-243 (LFTAMIIGCALCVTLPMSLLNFF), 256-278 (VYEAMVPLFSPCLLFILSTAWIL), 291-310 (VFYFMVGTAFANSTCQLIVC), 317-339 (CPTLNWLLVPLFLVVLVVNLGVA), and 344-366 (SILLYTLTTAFTLAHIHYGVRVV). Position 387 (Sec-387) is a non-standard amino acid, selenocysteine.

Belongs to the CDP-alcohol phosphatidyltransferase class-I family. The cofactor is Mg(2+). It depends on Mn(2+) as a cofactor. In terms of tissue distribution, widely expressed. Abundant in brain, placenta, liver and pancreas, followed by heart, skeletal muscle, lung and kidney. In brain it is strongly expressed in cerebellum, followed by the occipital pole and the frontal lobe.

Its subcellular location is the endoplasmic reticulum membrane. The enzyme catalyses CDP-ethanolamine + a 1,2-diacyl-sn-glycerol = a 1,2-diacyl-sn-glycero-3-phosphoethanolamine + CMP + H(+). The catalysed reaction is 1-O-alkyl-2-acyl-sn-glycerol + CDP-ethanolamine = a 1-O-alkyl-2-acyl-sn-glycero-3-phosphoethanolamine + CMP + H(+). Its pathway is phospholipid metabolism; phosphatidylethanolamine biosynthesis; phosphatidylethanolamine from ethanolamine: step 3/3. Its function is as follows. Ethanolaminephosphotransferase that catalyzes the transfer of phosphoethanolamine (PE) from CDP-ethanolamine to lipid acceptors, the final step in the synthesis of PE via the 'Kennedy' pathway. PE is the second most abundant phospholipid of membranes in mammals and is involved in various membrane-related cellular processes. The enzyme is critical for the synthesis of several PE species and also catalyzes the synthesis of plasmanyl-PE, a lipid required for proper myelination and neurodevelopment, from 1-alkyl-2-acylglycerol. The sequence is that of Ethanolaminephosphotransferase 1 from Homo sapiens (Human).